A 139-amino-acid chain; its full sequence is Actin-depolymerizing factor 1 (139 aa).

One can recognise an ADF-H domain in the interval 5-139; the sequence is ASGMAVCDEC…SMDIVKSRAL (135 aa).

The protein belongs to the actin-binding proteins ADF family.

Actin-depolymerizing protein. Severs actin filaments (F-actin) and binds to actin monomers. In Oryza sativa subsp. japonica (Rice), this protein is Actin-depolymerizing factor 1 (ADF1).